Consider the following 340-residue polypeptide: MLEVIAKIREEALARVAAATSSEELEALRVRYLGKKGELTRVLRGMGKLPPEERPRVGQMANKVREELEGALKEHRENLSRREQAERLRAEALDVTLPGRPVTRGNRHPLYQILNEIKAVFIGLGFDVAEGPEVESDYYNFEALNLPKEHPARDMQDSFYITEDVLLRTHTSPVQVRVMEARHPQLPIRIIAPGKVYRRDDDATHSPLFHQVEGLLVDRRVTFGDLKGTLMAFLKQMFGEQVRVRFRPSYFPFTEPSAEVDMSCVMCGGSGCRVCSHTGWLEILGCGMVHPKVLSMSGYDPEEVSGFAFGLGVERVAMLKYGIDDLRLFYENDLRFLRQF.

Glu255 serves as a coordination point for Mg(2+).

It belongs to the class-II aminoacyl-tRNA synthetase family. Phe-tRNA synthetase alpha subunit type 1 subfamily. Tetramer of two alpha and two beta subunits. Requires Mg(2+) as cofactor.

The protein resides in the cytoplasm. The catalysed reaction is tRNA(Phe) + L-phenylalanine + ATP = L-phenylalanyl-tRNA(Phe) + AMP + diphosphate + H(+). The chain is Phenylalanine--tRNA ligase alpha subunit from Moorella thermoacetica (strain ATCC 39073 / JCM 9320).